The chain runs to 158 residues: Transcription elongation factor GreA (158 aa).

Positions 3–75 (TEKTYPMTQE…TQLENMIRNA (73 aa)) form a coiled coil.

It belongs to the GreA/GreB family.

Necessary for efficient RNA polymerase transcription elongation past template-encoded arresting sites. The arresting sites in DNA have the property of trapping a certain fraction of elongating RNA polymerases that pass through, resulting in locked ternary complexes. Cleavage of the nascent transcript by cleavage factors such as GreA or GreB allows the resumption of elongation from the new 3'terminus. GreA releases sequences of 2 to 3 nucleotides. The chain is Transcription elongation factor GreA from Bacillus cereus (strain ATCC 14579 / DSM 31 / CCUG 7414 / JCM 2152 / NBRC 15305 / NCIMB 9373 / NCTC 2599 / NRRL B-3711).